The following is a 693-amino-acid chain: DNA ligase (693 aa).

NAD(+)-binding positions include 45–49 (DSEYD), 94–95 (SI), and Glu131. Lys133 (N6-AMP-lysine intermediate) is an active-site residue. NAD(+)-binding residues include Arg154, Glu190, Lys307, and Lys331. The Zn(2+) site is built by Cys429, Cys432, Cys447, and Cys453. One can recognise a BRCT domain in the interval 615–693 (ASSSKLEGKT…EEGLLSLLAE (79 aa)).

The protein belongs to the NAD-dependent DNA ligase family. LigA subfamily. Mg(2+) is required as a cofactor. Mn(2+) serves as cofactor.

The enzyme catalyses NAD(+) + (deoxyribonucleotide)n-3'-hydroxyl + 5'-phospho-(deoxyribonucleotide)m = (deoxyribonucleotide)n+m + AMP + beta-nicotinamide D-nucleotide.. Its function is as follows. DNA ligase that catalyzes the formation of phosphodiester linkages between 5'-phosphoryl and 3'-hydroxyl groups in double-stranded DNA using NAD as a coenzyme and as the energy source for the reaction. It is essential for DNA replication and repair of damaged DNA. This Methylobacillus flagellatus (strain ATCC 51484 / DSM 6875 / VKM B-1610 / KT) protein is DNA ligase.